Here is a 240-residue protein sequence, read N- to C-terminus: Gene 88 protein (240 aa).

The polypeptide is Gene 88 protein (88) (Mycobacterium phage D29 (Mycobacteriophage D29)).